The chain runs to 186 residues: Der GTPase-activating protein YihI (186 aa).

A disordered region spans residues 39–77 (LDAKAREDKKKRKHKGLASGSRHSAVEEKANKLQNEIKD). The span at 62-77 (SAVEEKANKLQNEIKD) shows a compositional bias: basic and acidic residues.

The protein belongs to the YihI family. In terms of assembly, interacts with Der.

In terms of biological role, a GTPase-activating protein (GAP) that modifies Der/EngA GTPase function. May play a role in ribosome biogenesis. The sequence is that of Der GTPase-activating protein YihI from Haemophilus influenzae (strain 86-028NP).